We begin with the raw amino-acid sequence, 366 residues long: Beta sliding clamp (366 aa).

Belongs to the beta sliding clamp family. As to quaternary structure, forms a ring-shaped head-to-tail homodimer around DNA which binds and tethers DNA polymerases and other proteins to the DNA. The DNA replisome complex has a single clamp-loading complex (3 tau and 1 each of delta, delta', psi and chi subunits) which binds 3 Pol III cores (1 core on the leading strand and 2 on the lagging strand) each with a beta sliding clamp dimer. Additional proteins in the replisome are other copies of gamma, psi and chi, Ssb, DNA helicase and RNA primase.

The protein localises to the cytoplasm. In terms of biological role, confers DNA tethering and processivity to DNA polymerases and other proteins. Acts as a clamp, forming a ring around DNA (a reaction catalyzed by the clamp-loading complex) which diffuses in an ATP-independent manner freely and bidirectionally along dsDNA. Initially characterized for its ability to contact the catalytic subunit of DNA polymerase III (Pol III), a complex, multichain enzyme responsible for most of the replicative synthesis in bacteria; Pol III exhibits 3'-5' exonuclease proofreading activity. The beta chain is required for initiation of replication as well as for processivity of DNA replication. The chain is Beta sliding clamp (dnaN) from Salmonella typhimurium (strain LT2 / SGSC1412 / ATCC 700720).